Here is a 262-residue protein sequence, read N- to C-terminus: Virulence plasmid protein pGP6-D-related protein (262 aa).

It belongs to the UPF0137 (pGP6-D) family.

This chain is Virulence plasmid protein pGP6-D-related protein, found in Chlamydia muridarum (strain MoPn / Nigg).